The sequence spans 361 residues: MEKLASAKTCLKLLQVMPGVQQAALLPGGGLGVLASPLQNLIQMQQVRHRQTKHWKPEFKRLRKLKFVKMDLPNLREKQEDITKEEMRSRMKERGVLPPRPWMERPFHISCTGGIFEAYVPPEGDGKKSIISTSGAKQKLEFLEKKSKSLMAVRKIRSYDENFSSDDFGAEAQDIYIQAHTHMAAKDKYKIREFVSERCYPEMMHNVKDKTIRWKFLQSLEPPRVVHARVTEVITKENQFAQVTVRFHSQQMLAIYDRFGRLMHGSEIITKDVLEYVVFEKHISNEYGKWRLHDKIIPDWLPAKQPAPITYRLIEDAEEPPKELSAGDAEVKQVDSVGEQSKEQLPLATPVESHTKPSLAI.

A disordered region spans residues 319 to 361; it reads EPPKELSAGDAEVKQVDSVGEQSKEQLPLATPVESHTKPSLAI.

The protein belongs to the mitochondrion-specific ribosomal protein mL45 family.

The protein localises to the mitochondrion. This is Large ribosomal subunit protein mL45 (mRpL45) from Drosophila melanogaster (Fruit fly).